A 147-amino-acid polypeptide reads, in one-letter code: DNA polymerase III subunit chi (147 aa).

The protein belongs to the DNA polymerase III chi/HolC chain family. In terms of assembly, the DNA polymerase III holoenzyme complex contains at least 10 different subunits organized into 3 functionally essential subassemblies: the Pol III core, the beta sliding clamp processivity factor and the clamp-loading complex. The Pol III core (subunits alpha, epsilon and theta) contains the polymerase and the 3'-5' exonuclease proofreading activities. The polymerase is tethered to the template via the dimeric beta sliding clamp processivity factor. The clamp-loading complex (also called gamma complex) assembles the beta sliding clamp onto the primed template and plays a central role in the organization and communication at the replication fork. The clamp-loading complex contains delta, delta', psi and chi, and 3 copies of either or both of two different DnaX proteins, gamma and tau. The DNA replisome complex has a single clamp loader (3 tau and 1 each of delta, delta', psi and chi subunits) which binds 3 Pol III cores (1 core on the leading strand and 2 on the lagging strand) each with a beta sliding clamp dimer. Additional proteins in the replisome are other copies of gamma, psi (holD) and chi (this protein), SSB, DNA helicase and RNA primase. The clamp loader hydrolyzes ATP to assemble the beta processivity factor onto the primed template and plays a central role in the organization and communication at the replication fork. The only subunit of the DNA polymerase III holoenzyme known to interact with single-stranded DNA binding protein (SSB). Interacts directly with the psi subunit (holD). Interacts directly with DNA helicase YoaA. It binds to HolD and YoaA, but not both simultaneously.

It carries out the reaction DNA(n) + a 2'-deoxyribonucleoside 5'-triphosphate = DNA(n+1) + diphosphate. In terms of biological role, part of the beta sliding clamp loading complex, which hydrolyzes ATP to load the beta clamp onto primed DNA to form the DNA replication pre-initiation complex. DNA polymerase III is a complex, multichain enzyme responsible for most of the replicative synthesis in bacteria. This DNA polymerase also exhibits 3' to 5' exonuclease activity. Genetically identified as involved in the repair of replication forks and tolerance of the chain-terminating nucleoside analog 3' AZT. This subunit may stabilize YoaA and/or stimulate the helicase activity of YoaA. The chain is DNA polymerase III subunit chi from Escherichia coli (strain K12).